Here is a 314-residue protein sequence, read N- to C-terminus: Probable dimethyladenosine transferase (314 aa).

S-adenosyl-L-methionine-binding residues include His36, Leu38, Gly63, Glu84, Asp112, and Asn127.

The protein belongs to the class I-like SAM-binding methyltransferase superfamily. rRNA adenine N(6)-methyltransferase family. Part of the small subunit (SSU) processome, composed of more than 70 proteins and the RNA chaperone small nucleolar RNA (snoRNA) U3.

Its subcellular location is the nucleus. The protein localises to the nucleoplasm. It localises to the nucleolus. It catalyses the reaction adenosine(1779)/adenosine(1780) in 18S rRNA + 4 S-adenosyl-L-methionine = N(6)-dimethyladenosine(1779)/N(6)-dimethyladenosine(1780) in 18S rRNA + 4 S-adenosyl-L-homocysteine + 4 H(+). Its function is as follows. Specifically dimethylates two adjacent adenosines in the loop of a conserved hairpin near the 3'-end of 18S rRNA in the 40S particle. Involved in the pre-rRNA processing steps leading to small-subunit rRNA production independently of its RNA-modifying catalytic activity. Part of the small subunit (SSU) processome, first precursor of the small eukaryotic ribosomal subunit. During the assembly of the SSU processome in the nucleolus, many ribosome biogenesis factors, an RNA chaperone and ribosomal proteins associate with the nascent pre-rRNA and work in concert to generate RNA folding, modifications, rearrangements and cleavage as well as targeted degradation of pre-ribosomal RNA by the RNA exosome. The sequence is that of Probable dimethyladenosine transferase (dimt1) from Dictyostelium discoideum (Social amoeba).